The following is a 342-amino-acid chain: Endo-1,4-beta-xylanase A (342 aa).

The 332-residue stretch at 11–342 (EMLNLSLAKT…KEALYRILRF (332 aa)) folds into the GH10 domain. Glu-144 (proton donor) is an active-site residue. Catalysis depends on Glu-252, which acts as the Nucleophile.

Belongs to the glycosyl hydrolase 10 (cellulase F) family. Cytoplasmic xylanase subfamily.

It is found in the cytoplasm. It carries out the reaction Endohydrolysis of (1-&gt;4)-beta-D-xylosidic linkages in xylans.. It functions in the pathway glycan degradation; xylan degradation. The protein is Endo-1,4-beta-xylanase A (xynA) of Caldicellulosiruptor saccharolyticus (Caldocellum saccharolyticum).